Reading from the N-terminus, the 44-residue chain is Protein PsbN (44 aa).

A helical membrane pass occupies residues Phe6–Ile26.

This sequence belongs to the PsbN family.

It is found in the plastid. It localises to the chloroplast thylakoid membrane. Functionally, may play a role in photosystem I and II biogenesis. The chain is Protein PsbN from Oedogonium cardiacum (Filamentous green alga).